Here is a 292-residue protein sequence, read N- to C-terminus: 4-hydroxy-tetrahydrodipicolinate synthase (292 aa).

A pyruvate-binding site is contributed by Thr-45. Tyr-133 serves as the catalytic Proton donor/acceptor. The active-site Schiff-base intermediate with substrate is Lys-161. Residue Ile-203 participates in pyruvate binding.

This sequence belongs to the DapA family. Homotetramer; dimer of dimers.

The protein resides in the cytoplasm. The catalysed reaction is L-aspartate 4-semialdehyde + pyruvate = (2S,4S)-4-hydroxy-2,3,4,5-tetrahydrodipicolinate + H2O + H(+). Its pathway is amino-acid biosynthesis; L-lysine biosynthesis via DAP pathway; (S)-tetrahydrodipicolinate from L-aspartate: step 3/4. Its function is as follows. Catalyzes the condensation of (S)-aspartate-beta-semialdehyde [(S)-ASA] and pyruvate to 4-hydroxy-tetrahydrodipicolinate (HTPA). This chain is 4-hydroxy-tetrahydrodipicolinate synthase, found in Vibrio cholerae serotype O1 (strain ATCC 39541 / Classical Ogawa 395 / O395).